The chain runs to 388 residues: Lipid-A-disaccharide synthase (388 aa).

It belongs to the LpxB family.

It catalyses the reaction a lipid X + a UDP-2-N,3-O-bis[(3R)-3-hydroxyacyl]-alpha-D-glucosamine = a lipid A disaccharide + UDP + H(+). It functions in the pathway bacterial outer membrane biogenesis; LPS lipid A biosynthesis. Functionally, condensation of UDP-2,3-diacylglucosamine and 2,3-diacylglucosamine-1-phosphate to form lipid A disaccharide, a precursor of lipid A, a phosphorylated glycolipid that anchors the lipopolysaccharide to the outer membrane of the cell. This chain is Lipid-A-disaccharide synthase, found in Saccharophagus degradans (strain 2-40 / ATCC 43961 / DSM 17024).